The chain runs to 165 residues: NADPH-dependent 7-cyano-7-deazaguanine reductase (165 aa).

The interval 1 to 24 (MTTRSTDQTEHLRALGQKTPYPAA) is disordered. Catalysis depends on cysteine 56, which acts as the Thioimide intermediate. Residue aspartate 63 is the Proton donor of the active site. Substrate is bound by residues 78-80 (VES) and 97-98 (ME).

Belongs to the GTP cyclohydrolase I family. QueF type 1 subfamily.

The protein localises to the cytoplasm. It carries out the reaction 7-aminomethyl-7-carbaguanine + 2 NADP(+) = 7-cyano-7-deazaguanine + 2 NADPH + 3 H(+). It participates in tRNA modification; tRNA-queuosine biosynthesis. In terms of biological role, catalyzes the NADPH-dependent reduction of 7-cyano-7-deazaguanine (preQ0) to 7-aminomethyl-7-deazaguanine (preQ1). The sequence is that of NADPH-dependent 7-cyano-7-deazaguanine reductase from Nitratidesulfovibrio vulgaris (strain ATCC 29579 / DSM 644 / CCUG 34227 / NCIMB 8303 / VKM B-1760 / Hildenborough) (Desulfovibrio vulgaris).